A 297-amino-acid chain; its full sequence is ATP synthase gamma chain (297 aa).

The protein belongs to the ATPase gamma chain family. In terms of assembly, F-type ATPases have 2 components, CF(1) - the catalytic core - and CF(0) - the membrane proton channel. CF(1) has five subunits: alpha(3), beta(3), gamma(1), delta(1), epsilon(1). CF(0) has three main subunits: a, b and c.

The protein resides in the cell membrane. Its function is as follows. Produces ATP from ADP in the presence of a proton gradient across the membrane. The gamma chain is believed to be important in regulating ATPase activity and the flow of protons through the CF(0) complex. The polypeptide is ATP synthase gamma chain (Beutenbergia cavernae (strain ATCC BAA-8 / DSM 12333 / CCUG 43141 / JCM 11478 / NBRC 16432 / NCIMB 13614 / HKI 0122)).